A 228-amino-acid polypeptide reads, in one-letter code: Response regulator MprA (228 aa).

In terms of domain architecture, Response regulatory spans 2–116 (RILAVDDDRA…ELLARIRALL (115 aa)). Position 46 is a 4-aspartylphosphate (Asp-46). The ompR/PhoB-type DNA-binding region spans 127–225 (SVAMSFSDLT…VRGVGYVLRE (99 aa)).

Post-translationally, phosphorylated and dephosphorylated by MprB.

It localises to the cytoplasm. Its function is as follows. Member of the two-component regulatory system MprB/MprA which contributes to maintaining a balance among several systems involved in stress resistance and is required for establishment and maintenance of persistent infection in the host. Functions as a transcriptional regulator that recognizes a 19-bp nucleotide motif comprizing two loosely conserved 8-bp direct DNA-binding motif repeats separated by a 3-bp spacer region. The sequence is that of Response regulator MprA (mprA) from Mycobacterium leprae (strain TN).